Consider the following 130-residue polypeptide: Classical arabinogalactan protein 7 (130 aa).

An N-terminal signal peptide occupies residues 1 to 21; the sequence is MNSKIIEAFFIVALFTTSCLA. Position 22 is a pyrrolidone carboxylic acid (Gln22). The tract at residues 22-108 is disordered; sequence QAPAPSPTTT…DASAPPPNAA (87 aa). A 4-hydroxyproline mark is found at Pro24, Pro26, Pro28, Pro35, and Pro36. O-linked (Ara...) hydroxyproline glycans are attached at residues Pro24, Pro26, Pro28, Pro35, and Pro36. A compositionally biased stretch (pro residues) spans 33–68; it reads TPPPVATPPPAATPAPTTTPPPAVSPAPTSSPPSSA. Asn106 carries the GPI-anchor amidated asparagine lipid modification. A propeptide spans 107 to 130 (removed in mature form); sequence AALTNKAFVVGSLVAAIIYAVVLA.

This sequence belongs to the classical AGP family. O-glycosylated on hydroxyprolines; noncontiguous hydroxylproline residues are glycosylated with arabinogalactan.

It is found in the cell membrane. Its function is as follows. Proteoglycan that seems to be implicated in diverse developmental roles such as differentiation, cell-cell recognition, embryogenesis and programmed cell death. The polypeptide is Classical arabinogalactan protein 7 (AGP7) (Arabidopsis thaliana (Mouse-ear cress)).